An 824-amino-acid chain; its full sequence is MKPIPATPDHLGQHQESPRRKDKGEAESERQRTRERLEATLAGLAELGYLRHRQELLVKSALTPGAPTHGDTATRAGDTPRSLEEKFLEDNILLLKKQLNCLRKRDAGLLSQLHELDKQINDLKIDVEKTEEHLETDSRPSSGFYELSDGTSGSLSNSSNSVFSECLSSCHSSTCFCNPLETSLNLTDGQAKSADDFLEWLDYRDSQHETGTVRRSFSAPHSNSVDVAADVHPKYQCDLVSKNGNDIYRYPSPLHAVAVQSPMFLLSVMGNIKAEEPEEEIGPNDNDDCIVPELDHLKDEDSFLHQSSLCSLPLSSGKKMDGYILSIIQKKAHPVRTNKPRTSVNADPGKGILRHGSICVKQTGGVSQSSTVNLKNSKQTCLHSTGMISVDNSTYPSLKQCSKESLSEQLESKRMPSISTYPSCNVNELQSQNNSRNTVKSVCQGLARGSVAMTSNVQKENVTPNAPTNLSNASSSACNGSPRESTQMSALLPQEIKVVPPVKKISPKNTLLSYHASSSFDERPPLDFKSEGSSSQSLDEGLLVNAHYIPAQQQGVKLHKNIKNVKIVKSSTLKHRANVQYVAENGSQTLKEKSKAVGKKCRFPEDLDTNKKVKKSTPRTKKTSHPNFEPAVVGRNPVAVRSGIKSHGQPKDVVLAKPKHKRGDYRRWKSSAEISYEEALRRARRRAQREMMGVYAQVPFPYASPYAYIASDSEYSAECESLFHSTVVDTSEDEQSNYTTNCFGDSESSLSEVEFVGESTTSSDTDESGGLIWSQFVHTLPMQATATAELQTTAKAFVKIKASHNLKKKILRFRSGSLKLMTTV.

Disordered stretches follow at residues Met-1 to Arg-34, Ala-61 to Pro-80, Glu-131 to Gly-150, Thr-454 to Gln-487, and Ala-516 to Gln-536. The segment at Lys-2–Ser-343 is interaction with tcf7l1. Residues Leu-11–Arg-34 show a composition bias toward basic and acidic residues. Positions Arg-19–Leu-47 form a coiled coil. Over residues Phe-520–Ser-530 the composition is skewed to basic and acidic residues. The PDZ-binding motif lies at Met-821 to Val-824.

This sequence belongs to the dapper family. As to quaternary structure, interacts with dbf4, dvl2 and tcf7l1.

Its subcellular location is the cytoplasm. It localises to the nucleus. Involved in regulation of intracellular signaling pathways during development. Specifically thought to play a role in canonical and/or non-canonical Wnt signaling pathways through interaction with DSH (Dishevelled) family proteins. Binds to dvl2 and regulates the degradation of ctnnb1/beta-catenin, thereby modulating the transcriptional activation of target genes of the Wnt signaling pathway. May also bind to and directly stimulate the activity of tcf7l1. The protein is Dapper 1 (dact1) of Xenopus tropicalis (Western clawed frog).